The primary structure comprises 213 residues: Thymidylate kinase (213 aa).

10 to 17 (GLEGAGKT) contributes to the ATP binding site.

The protein belongs to the thymidylate kinase family.

The catalysed reaction is dTMP + ATP = dTDP + ADP. In terms of biological role, phosphorylation of dTMP to form dTDP in both de novo and salvage pathways of dTTP synthesis. The sequence is that of Thymidylate kinase from Escherichia coli O1:K1 / APEC.